The primary structure comprises 472 residues: Carboxypeptidase E (472 aa).

The N-terminal stretch at 1–21 (MLHAMRPVLLVAALLAVTAHA) is a signal peptide. The region spanning 39-359 (HYHNQAQLEA…KSIFEYVWKS (321 aa)) is the Peptidase M14 domain. 2 residues coordinate Zn(2+): histidine 101 and glutamate 104. Asparagine 134 is a glycosylation site (N-linked (GlcNAc...) asparagine). Histidine 232 lines the Zn(2+) pocket. Glutamate 329 serves as the catalytic Proton donor/acceptor. N-linked (GlcNAc...) asparagine glycosylation is found at asparagine 385 and asparagine 428.

Belongs to the peptidase M14 family. The cofactor is Zn(2+). Expression is restricted to the nervous system.

The protein resides in the cell projection. The protein localises to the axon. It localises to the perikaryon. It is found in the cytoplasmic vesicle. Its subcellular location is the secretory vesicle lumen. The enzyme catalyses Release of C-terminal arginine or lysine residues from polypeptides.. During FMRFamide-like peptide (FaRPs or FLP) and neuropeptide-like protein (NLP) precursor processing, catalyzes the removal of Arg or Lys residues from the C-terminus following the initial endoprotease cleavage. By processing neuropeptides, modulates basal acetylcholine release at the ventral cord neuromuscular junctions. Involved in egg-laying, defecation and locomotion. By processing FLP neuropeptides, regulates the turning step of male mating behavior. Involved in reducing pharyngeal pumping in response to high CO(2) levels. The protein is Carboxypeptidase E of Caenorhabditis elegans.